Here is a 661-residue protein sequence, read N- to C-terminus: DNA ligase (661 aa).

Residues 31–35 (DKEYD), 79–80 (SL), and E112 each bind NAD(+). K114 functions as the N6-AMP-lysine intermediate in the catalytic mechanism. Residues R135, E169, K281, and K305 each coordinate NAD(+). Residues C398, C401, C414, and C420 each coordinate Zn(2+). A BRCT domain is found at 578-661 (QQENIFLGKT…ISEAEFEAML (84 aa)).

This sequence belongs to the NAD-dependent DNA ligase family. LigA subfamily. It depends on Mg(2+) as a cofactor. Requires Mn(2+) as cofactor.

It catalyses the reaction NAD(+) + (deoxyribonucleotide)n-3'-hydroxyl + 5'-phospho-(deoxyribonucleotide)m = (deoxyribonucleotide)n+m + AMP + beta-nicotinamide D-nucleotide.. In terms of biological role, DNA ligase that catalyzes the formation of phosphodiester linkages between 5'-phosphoryl and 3'-hydroxyl groups in double-stranded DNA using NAD as a coenzyme and as the energy source for the reaction. It is essential for DNA replication and repair of damaged DNA. The protein is DNA ligase of Alkaliphilus oremlandii (strain OhILAs) (Clostridium oremlandii (strain OhILAs)).